A 268-amino-acid chain; its full sequence is Purine nucleoside phosphorylase (268 aa).

Residues serine 36, histidine 68, 88 to 90 (RIH), and alanine 120 contribute to the phosphate site. Glutamate 189 provides a ligand contact to a purine D-ribonucleoside. Serine 208 contributes to the phosphate binding site. Asparagine 231 lines the a purine D-ribonucleoside pocket.

Belongs to the PNP/MTAP phosphorylase family. Homotrimer.

It carries out the reaction a purine 2'-deoxy-D-ribonucleoside + phosphate = a purine nucleobase + 2-deoxy-alpha-D-ribose 1-phosphate. It participates in purine metabolism; purine nucleoside salvage. Functionally, the purine nucleoside phosphorylases catalyze the phosphorolytic breakdown of the N-glycosidic bond in the beta-(deoxy)ribonucleoside molecules, with the formation of the corresponding free purine bases and pentose-1-phosphate. Cleaves guanosine, inosine, 2'-deoxyguanosine and 2'-deoxyinosine. This chain is Purine nucleoside phosphorylase (punA), found in Mycobacterium bovis (strain ATCC BAA-935 / AF2122/97).